The primary structure comprises 146 residues: MTSKPLEHVADIEKSLRHIAAIIKQKGREILNQYAITPPQFVGLQWLYELGDMTIGELSGKMYLACSTTTDLIDRMQKNELVERVKDPADRRVVRIHLLPEGERIIQEVITKRQEYLRDMFESFTDEEIAIFEKSLMKLQHEMKRK.

An HTH marR-type domain is found at 9–141 (VADIEKSLRH…FEKSLMKLQH (133 aa)). A DNA-binding region (H-T-H motif) is located at residues 55-78 (IGELSGKMYLACSTTTDLIDRMQK).

This is an uncharacterized protein from Bacillus subtilis (strain 168).